Consider the following 119-residue polypeptide: Large ribosomal subunit protein uL14 (119 aa).

It belongs to the universal ribosomal protein uL14 family. In terms of assembly, part of the 50S ribosomal subunit. Forms a cluster with proteins L3 and L19. In the 70S ribosome, L14 and L19 interact and together make contacts with the 16S rRNA in bridges B5 and B8.

Its function is as follows. Binds to 23S rRNA. Forms part of two intersubunit bridges in the 70S ribosome. This is Large ribosomal subunit protein uL14 from Anaplasma marginale (strain St. Maries).